A 72-amino-acid polypeptide reads, in one-letter code: Bradykinin-potentiating peptide BmKbpp (72 aa).

An N-terminal signal peptide occupies residues 1–22; sequence MNKKTLLVIFFVTMLIVDEVNS. The propeptide occupies 70-72; sequence RRR.

Belongs to the non-disulfide-bridged peptide (NDBP) superfamily. Long chain multifunctional peptide (group 2) family. As to expression, expressed by the venom gland.

Its subcellular location is the secreted. Its function is as follows. Amphipathic peptide that shows bradykinin potentiating activity and antimicrobial activities against bacteria and fungi. Has higher antibacterial activities against Gram-negative than against Gram-positive bacteria. Also inhibits NADPH oxidase-dependent superoxide production (IC(50) is 0.4 uM on granulocytes stimulated with PMA, IC(50) is 0.51 uM on HL-60 cells undifferentiated and IC(50) is 0.53 uM on HL-60 cells treated with DMSO). The C-terminal peptide shows a higher bradykinin potentiating activity than the complete peptide. The protein is Bradykinin-potentiating peptide BmKbpp of Olivierus martensii (Manchurian scorpion).